The sequence spans 469 residues: Cholesterol 7-desaturase nvd (469 aa).

The N-terminal stretch at 1 to 25 is a signal peptide; sequence MASFCASKFLPGLLMLGLGLAVALA. Residues 58 to 78 form a helical membrane-spanning segment; that stretch reads NFVASQTLLTLTIFGVASFIL. Residues 132–238 form the Rieske domain; it reads IPLVASQDLV…VIEQNGFVLV (107 aa). Residues Cys172, His174, Cys192, and His195 each coordinate [2Fe-2S] cluster.

The protein belongs to the cholesterol 7-desaturase family. [2Fe-2S] cluster is required as a cofactor.

The protein resides in the membrane. The catalysed reaction is cholesterol + NADPH + O2 + H(+) = 7-dehydrocholesterol + NADP(+) + 2 H2O. It catalyses the reaction cholesterol + NADH + O2 + H(+) = 7-dehydrocholesterol + NAD(+) + 2 H2O. The protein operates within steroid hormone biosynthesis; dafachronic acid biosynthesis. In terms of biological role, catalyzes the production of 7-dehydrocholesterol (7-DHC or cholesta-5,7-dien-3beta-ol) by inserting a double bond (desaturating) at the C7-C8 single bond of cholesterol. Essential regulator of steroid biosynthesis as this reaction is the first step in the synthesis of the steroid hormone Delta(7)-dafachronic acid. This is Cholesterol 7-desaturase nvd from Hemicentrotus pulcherrimus (Sea urchin).